Reading from the N-terminus, the 502-residue chain is Intracellular exo-alpha-(1-&gt;5)-L-arabinofuranosidase (502 aa).

The alpha-L-arabinofuranose site is built by Glu-29, Asn-74, and Asn-174. Residue Glu-175 is the Proton donor/acceptor of the active site. Positions 246, 294, and 351 each coordinate alpha-L-arabinofuranose. Glu-294 acts as the Nucleophile in catalysis.

This sequence belongs to the glycosyl hydrolase 51 family. Homohexamer; trimer of dimers.

Its subcellular location is the cytoplasm. The catalysed reaction is Hydrolysis of terminal non-reducing alpha-L-arabinofuranoside residues in alpha-L-arabinosides.. Its pathway is glycan metabolism; L-arabinan degradation. With respect to regulation, strongly inhibited by Hg(2+). Its function is as follows. Involved in the degradation of arabinan and is a key enzyme in the complete degradation of the plant cell wall. Catalyzes the cleavage of terminal alpha-(1-&gt;5)-arabinofuranosyl bonds in different hemicellulosic homopolysaccharides (branched and debranched arabinans). It acts preferentially on aryl-alpha-L-arabinofuranosides, and is much less effective on aryl-beta-D-xylopyranosides. The chain is Intracellular exo-alpha-(1-&gt;5)-L-arabinofuranosidase (abfA) from Geobacillus stearothermophilus (Bacillus stearothermophilus).